The primary structure comprises 1126 residues: Replication protein 1a (1126 aa).

The segment at 69 to 406 (SFSLDATQQN…HTIIGGVTLI (338 aa)) is methyltransferase. The Alphavirus-like MT domain occupies 90 to 278 (VFSNSSSSSH…HRFSLLKHYL (189 aa)). The (+)RNA virus helicase ATP-binding domain occupies 806 to 963 (DQSCVFASAE…HKLTGKVERK (158 aa)). The tract at residues 834-1094 (TIVDGVAGCG…RHKKTFKYFT (261 aa)) is ATP-dependent helicase. 838–845 (GVAGCGKT) provides a ligand contact to ATP. The region spanning 964–1125 (LITWRSPADA…SILARSYNHN (162 aa)) is the (+)RNA virus helicase C-terminal domain.

The protein belongs to the bromoviridae replication protein 1a family. As to quaternary structure, interacts with RNA-directed RNA polymerase 2a.

The protein localises to the host endoplasmic reticulum membrane. Functionally, involved in the virus replication. Contains a helicase domain and a methyltransferase domain. The methyltransferase domain is probably involved in viral RNA capping. Involved in the formation of ER membrane spherular invaginations in which RNA replication complexes form. The protein is Replication protein 1a of Alfalfa mosaic virus (AMV).